The primary structure comprises 111 residues: Toxin 3FTx-Tel4 (111 aa).

The N-terminal stretch at Met1–Ala19 is a signal peptide. A propeptide spanning residues Asp20–Gly34 is cleaved from the precursor. Residue Gln35 is modified to Pyrrolidone carboxylic acid. Intrachain disulfides connect Cys44/Cys68, Cys47/Cys55, Cys61/Cys87, Cys91/Cys102, and Cys103/Cys108.

The protein belongs to the three-finger toxin family. Ancestral subfamily. Boigatoxin sub-subfamily. As to expression, expressed by the venom gland.

The protein resides in the secreted. In terms of biological role, potent postsynaptic neurotoxin. Displays readily reversible competitive antagonism at the nicotinic acetylcholine receptor (nAChR). This chain is Toxin 3FTx-Tel4, found in Telescopus dhara (Egyptian catsnake).